Reading from the N-terminus, the 484-residue chain is ATP synthase subunit beta, chloroplastic (484 aa).

163-170 (GGAGVGKT) contributes to the ATP binding site.

This sequence belongs to the ATPase alpha/beta chains family. F-type ATPases have 2 components, CF(1) - the catalytic core - and CF(0) - the membrane proton channel. CF(1) has five subunits: alpha(3), beta(3), gamma(1), delta(1), epsilon(1). CF(0) has four main subunits: a(1), b(1), b'(1) and c(9-12).

It is found in the plastid. It localises to the chloroplast thylakoid membrane. The catalysed reaction is ATP + H2O + 4 H(+)(in) = ADP + phosphate + 5 H(+)(out). Functionally, produces ATP from ADP in the presence of a proton gradient across the membrane. The catalytic sites are hosted primarily by the beta subunits. This chain is ATP synthase subunit beta, chloroplastic, found in Stigeoclonium helveticum (Green alga).